Consider the following 398-residue polypeptide: Carbamoyl phosphate synthase small chain (398 aa).

Residues 1–199 are CPSase; it reads MTPAWATEKP…WNEGFGEQAE (199 aa). L-glutamine-binding residues include serine 54, glycine 251, and glycine 253. Positions 203 to 391 constitute a Glutamine amidotransferase type-1 domain; it reads HVVAIDYGVK…VNLIREKRGE (189 aa). Catalysis depends on cysteine 280, which acts as the Nucleophile. Residues leucine 281, glutamine 284, asparagine 322, glycine 324, and phenylalanine 325 each coordinate L-glutamine. Residues histidine 364 and glutamate 366 contribute to the active site.

The protein belongs to the CarA family. In terms of assembly, composed of two chains; the small (or glutamine) chain promotes the hydrolysis of glutamine to ammonia, which is used by the large (or ammonia) chain to synthesize carbamoyl phosphate. Tetramer of heterodimers (alpha,beta)4.

It carries out the reaction hydrogencarbonate + L-glutamine + 2 ATP + H2O = carbamoyl phosphate + L-glutamate + 2 ADP + phosphate + 2 H(+). The enzyme catalyses L-glutamine + H2O = L-glutamate + NH4(+). It participates in amino-acid biosynthesis; L-arginine biosynthesis; carbamoyl phosphate from bicarbonate: step 1/1. The protein operates within pyrimidine metabolism; UMP biosynthesis via de novo pathway; (S)-dihydroorotate from bicarbonate: step 1/3. In terms of biological role, small subunit of the glutamine-dependent carbamoyl phosphate synthetase (CPSase). CPSase catalyzes the formation of carbamoyl phosphate from the ammonia moiety of glutamine, carbonate, and phosphate donated by ATP, constituting the first step of 2 biosynthetic pathways, one leading to arginine and/or urea and the other to pyrimidine nucleotides. The small subunit (glutamine amidotransferase) binds and cleaves glutamine to supply the large subunit with the substrate ammonia. This chain is Carbamoyl phosphate synthase small chain, found in Mesorhizobium japonicum (strain LMG 29417 / CECT 9101 / MAFF 303099) (Mesorhizobium loti (strain MAFF 303099)).